A 186-amino-acid chain; its full sequence is MDQAKLARMQASVRIGTFCSFLWIFEVLESESVFSADGFQAHHLGNVIGKGTPRRKVKKVHKSSGADDKKLQTTLKKMNVQPIQAIEEVNMFKEDGNVIHFAAPKVHASVPSNTFALYGNGEEKELTELVPGILNQLGPDSLASLRKLAESYQNMQKQAGAEGKKDEDEDDIPDLVEGENFESNVE.

Residues 65 to 130 (GADDKKLQTT…GEEKELTELV (66 aa)) enclose the NAC-A/B domain. The segment at 153–186 (QNMQKQAGAEGKKDEDEDDIPDLVEGENFESNVE) is disordered. Positions 167-186 (EDEDDIPDLVEGENFESNVE) are enriched in acidic residues.

The protein belongs to the NAC-beta family. As to quaternary structure, part of the nascent polypeptide-associated complex (NAC), consisting of egd2 and egd1. NAC associates with ribosomes via egd1.

Its subcellular location is the cytoplasm. It localises to the nucleus. Its function is as follows. Component of the nascent polypeptide-associated complex (NAC), a dynamic component of the ribosomal exit tunnel, protecting the emerging polypeptides from interaction with other cytoplasmic proteins to ensure appropriate nascent protein targeting. The NAC complex also promotes mitochondrial protein import by enhancing productive ribosome interactions with the outer mitochondrial membrane and blocks the inappropriate interaction of ribosomes translating non-secretory nascent polypeptides with translocation sites in the membrane of the endoplasmic reticulum. EGD1 may act as a transcription factor that exert a negative effect on the expression of several genes that are transcribed by RNA polymerase II. This Aspergillus fumigatus (strain ATCC MYA-4609 / CBS 101355 / FGSC A1100 / Af293) (Neosartorya fumigata) protein is Nascent polypeptide-associated complex subunit beta (egd1).